Here is a 389-residue protein sequence, read N- to C-terminus: Succinyl-diaminopimelate desuccinylase (389 aa).

Residue His-72 coordinates Zn(2+). The active site involves Asp-74. Residue Asp-105 participates in Zn(2+) binding. The active-site Proton acceptor is Glu-144. Residues Glu-145, Glu-173, and His-362 each contribute to the Zn(2+) site.

This sequence belongs to the peptidase M20A family. DapE subfamily. As to quaternary structure, homodimer. Requires Zn(2+) as cofactor. Co(2+) is required as a cofactor.

The catalysed reaction is N-succinyl-(2S,6S)-2,6-diaminopimelate + H2O = (2S,6S)-2,6-diaminopimelate + succinate. It functions in the pathway amino-acid biosynthesis; L-lysine biosynthesis via DAP pathway; LL-2,6-diaminopimelate from (S)-tetrahydrodipicolinate (succinylase route): step 3/3. Its function is as follows. Catalyzes the hydrolysis of N-succinyl-L,L-diaminopimelic acid (SDAP), forming succinate and LL-2,6-diaminopimelate (DAP), an intermediate involved in the bacterial biosynthesis of lysine and meso-diaminopimelic acid, an essential component of bacterial cell walls. This Nitrobacter hamburgensis (strain DSM 10229 / NCIMB 13809 / X14) protein is Succinyl-diaminopimelate desuccinylase.